The chain runs to 73 residues: Beta-defensin 39 (73 aa).

Positions 1–23 are cleaved as a signal peptide; the sequence is MKISCFLLLVLSLSCFQINSVSG. Intrachain disulfides connect Cys-29-Cys-58, Cys-36-Cys-51, and Cys-41-Cys-59.

This sequence belongs to the beta-defensin family.

Its subcellular location is the secreted. Its function is as follows. Has antibacterial activity. The polypeptide is Beta-defensin 39 (Defb39) (Rattus norvegicus (Rat)).